The sequence spans 166 residues: Small ribosomal subunit protein uS5 (166 aa).

One can recognise an S5 DRBM domain in the interval 11 to 74 (LQEKLIAVNR…EKARRNMINV (64 aa)).

It belongs to the universal ribosomal protein uS5 family. Part of the 30S ribosomal subunit. Contacts proteins S4 and S8.

With S4 and S12 plays an important role in translational accuracy. Its function is as follows. Located at the back of the 30S subunit body where it stabilizes the conformation of the head with respect to the body. This chain is Small ribosomal subunit protein uS5, found in Actinobacillus succinogenes (strain ATCC 55618 / DSM 22257 / CCUG 43843 / 130Z).